A 410-amino-acid chain; its full sequence is Arginine biosynthesis bifunctional protein ArgJ (410 aa).

Substrate contacts are provided by Thr-160, Lys-186, Thr-197, Glu-283, Asn-405, and Thr-410. Thr-197 acts as the Nucleophile in catalysis.

It belongs to the ArgJ family. Heterotetramer of two alpha and two beta chains.

The protein localises to the cytoplasm. The enzyme catalyses N(2)-acetyl-L-ornithine + L-glutamate = N-acetyl-L-glutamate + L-ornithine. The catalysed reaction is L-glutamate + acetyl-CoA = N-acetyl-L-glutamate + CoA + H(+). It participates in amino-acid biosynthesis; L-arginine biosynthesis; L-ornithine and N-acetyl-L-glutamate from L-glutamate and N(2)-acetyl-L-ornithine (cyclic): step 1/1. Its pathway is amino-acid biosynthesis; L-arginine biosynthesis; N(2)-acetyl-L-ornithine from L-glutamate: step 1/4. Competitively inhibited by L-ornithine. Its function is as follows. Catalyzes two activities which are involved in the cyclic version of arginine biosynthesis: the synthesis of N-acetylglutamate from glutamate and acetyl-CoA as the acetyl donor, and of ornithine by transacetylation between N(2)-acetylornithine and glutamate. In Geobacillus stearothermophilus (Bacillus stearothermophilus), this protein is Arginine biosynthesis bifunctional protein ArgJ.